Consider the following 666-residue polypeptide: DEAD-box ATP-dependent RNA helicase 30 (666 aa).

Residues P53 to R102 are disordered. Low complexity predominate over residues P64–P76. A compositionally biased stretch (basic and acidic residues) spans E80–R92. The Q motif signature appears at R251–S279. The 176-residue stretch at W282–V457 folds into the Helicase ATP-binding domain. An ATP-binding site is contributed by A295–T302. The DEAD box motif lies at D405–D408. Positions R485–A630 constitute a Helicase C-terminal domain. Residues S632 to Y666 form a disordered region. The segment covering M636 to N651 has biased composition (gly residues).

This sequence belongs to the DEAD box helicase family. DDX5/DBP2 subfamily.

The protein localises to the nucleus. It carries out the reaction ATP + H2O = ADP + phosphate + H(+). ATP-dependent RNA helicase involved nonsense-mediated mRNA decay and ribosome biogenesis through rRNA processing. The sequence is that of DEAD-box ATP-dependent RNA helicase 30 from Oryza sativa subsp. japonica (Rice).